A 429-amino-acid chain; its full sequence is 3-isopropylmalate dehydratase large subunit (429 aa).

Residues Cys303, Cys363, and Cys366 each contribute to the [4Fe-4S] cluster site.

Belongs to the aconitase/IPM isomerase family. LeuC type 2 subfamily. As to quaternary structure, heterodimer of LeuC and LeuD. [4Fe-4S] cluster is required as a cofactor.

The enzyme catalyses (2R,3S)-3-isopropylmalate = (2S)-2-isopropylmalate. Its pathway is amino-acid biosynthesis; L-leucine biosynthesis; L-leucine from 3-methyl-2-oxobutanoate: step 2/4. In terms of biological role, catalyzes the isomerization between 2-isopropylmalate and 3-isopropylmalate, via the formation of 2-isopropylmaleate. This chain is 3-isopropylmalate dehydratase large subunit, found in Caldicellulosiruptor saccharolyticus (strain ATCC 43494 / DSM 8903 / Tp8T 6331).